The following is a 290-amino-acid chain: Thymidylate synthase (290 aa).

Arg31 lines the dUMP pocket. (6R)-5,10-methylene-5,6,7,8-tetrahydrofolate is bound at residue His61. Arg152–Arg153 provides a ligand contact to dUMP. Cys172 functions as the Nucleophile in the catalytic mechanism. DUMP is bound by residues Arg192–Asp195, Asn203, and His233–Tyr235. (6R)-5,10-methylene-5,6,7,8-tetrahydrofolate is bound at residue Asp195. Ala289 contacts (6R)-5,10-methylene-5,6,7,8-tetrahydrofolate.

Belongs to the thymidylate synthase family. Bacterial-type ThyA subfamily. In terms of assembly, homodimer.

Its subcellular location is the cytoplasm. The enzyme catalyses dUMP + (6R)-5,10-methylene-5,6,7,8-tetrahydrofolate = 7,8-dihydrofolate + dTMP. Its pathway is pyrimidine metabolism; dTTP biosynthesis. Its function is as follows. Catalyzes the reductive methylation of 2'-deoxyuridine-5'-monophosphate (dUMP) to 2'-deoxythymidine-5'-monophosphate (dTMP) while utilizing 5,10-methylenetetrahydrofolate (mTHF) as the methyl donor and reductant in the reaction, yielding dihydrofolate (DHF) as a by-product. This enzymatic reaction provides an intracellular de novo source of dTMP, an essential precursor for DNA biosynthesis. The sequence is that of Thymidylate synthase from Psychrobacter cryohalolentis (strain ATCC BAA-1226 / DSM 17306 / VKM B-2378 / K5).